We begin with the raw amino-acid sequence, 323 residues long: NADH-ubiquinone oxidoreductase chain 1 (323 aa).

8 helical membrane-spanning segments follow: residues 4–24 (LFTVLELLSFLVPVLLAVAFL), 73–93 (YLFFLSPLLFMALALLLWNLM), 106–126 (LLLVLGLSSLSVYAILGSGWA), 150–170 (LALILLSLIIITSSFNLTYIM), 175–195 (FSWFALSCLPLFYIWFVSTLA), 226–246 (LFFIAEYANIILMNLFSVVIF), 256–276 (LFPLNVLTIGLKTTLLVFLFL), and 303–323 (IGALCATITIVLTLGIYLPLF).

It belongs to the complex I subunit 1 family.

Its subcellular location is the mitochondrion inner membrane. The catalysed reaction is a ubiquinone + NADH + 5 H(+)(in) = a ubiquinol + NAD(+) + 4 H(+)(out). In terms of biological role, core subunit of the mitochondrial membrane respiratory chain NADH dehydrogenase (Complex I) that is believed to belong to the minimal assembly required for catalysis. Complex I functions in the transfer of electrons from NADH to the respiratory chain. The immediate electron acceptor for the enzyme is believed to be ubiquinone. The polypeptide is NADH-ubiquinone oxidoreductase chain 1 (ND1) (Paracentrotus lividus (Common sea urchin)).